The chain runs to 358 residues: Transcription factor PCF6 (358 aa).

The interval 1–29 (MEAAVGDGEGGGGGGGRGKRGRGGGGGEM) is disordered. Residues 7–16 (DGEGGGGGGG) show a composition bias toward gly residues. Positions 52–110 (GKDRHSKVYTAKGIRDRRVRLSVATAIQFYDLQDRLGFDQPSKAIEWLINAASPAIDTL) constitute a TCP domain. Disordered stretches follow at residues 127–163 (ADAA…DKEV) and 282–308 (ANRG…QQLQ). Polar residues-rich tracts occupy residues 143-156 (LSNK…SETS) and 285-296 (GTLQSNSPSNMS).

As to quaternary structure, forms homodimers and heterodimers.

The protein localises to the nucleus. Its function is as follows. Transcription activator. Binds the promoter core sequence 5'-GGNCC-3'. The polypeptide is Transcription factor PCF6 (PCF6) (Oryza sativa subsp. indica (Rice)).